Consider the following 103-residue polypeptide: Large ribosomal subunit protein bL21 (103 aa).

It belongs to the bacterial ribosomal protein bL21 family. Part of the 50S ribosomal subunit. Contacts protein L20.

Functionally, this protein binds to 23S rRNA in the presence of protein L20. The sequence is that of Large ribosomal subunit protein bL21 from Chloroflexus aurantiacus (strain ATCC 29364 / DSM 637 / Y-400-fl).